The chain runs to 194 residues: Imidazoleglycerol-phosphate dehydratase (194 aa).

The protein belongs to the imidazoleglycerol-phosphate dehydratase family.

The protein localises to the cytoplasm. The enzyme catalyses D-erythro-1-(imidazol-4-yl)glycerol 3-phosphate = 3-(imidazol-4-yl)-2-oxopropyl phosphate + H2O. Its pathway is amino-acid biosynthesis; L-histidine biosynthesis; L-histidine from 5-phospho-alpha-D-ribose 1-diphosphate: step 6/9. The sequence is that of Imidazoleglycerol-phosphate dehydratase from Bacillus cereus (strain ATCC 14579 / DSM 31 / CCUG 7414 / JCM 2152 / NBRC 15305 / NCIMB 9373 / NCTC 2599 / NRRL B-3711).